The chain runs to 144 residues: Eukaryotic translation initiation factor 1A, Y-chromosomal (144 aa).

Over residues 1-15 the composition is skewed to basic residues; sequence MPKNKGKGGKNRRRG. Positions 1–26 are disordered; the sequence is MPKNKGKGGKNRRRGKNENESEKREL. Residues 16–26 show a composition bias toward basic and acidic residues; the sequence is KNENESEKREL. Residues 22–96 enclose the S1-like domain; it reads EKRELVFKED…NKADVILKYN (75 aa). Lys-88 participates in a covalent cross-link: Glycyl lysine isopeptide (Lys-Gly) (interchain with G-Cter in ubiquitin). The disordered stretch occupies residues 114–144; that stretch reads KINETDTFGPGDDDEIQFDDIGDDDEDIDDI. A compositionally biased stretch (acidic residues) spans 124–144; it reads GDDDEIQFDDIGDDDEDIDDI.

The protein belongs to the eIF-1A family. Component of the 43S pre-initiation complex (43S PIC), which is composed of the 40S ribosomal subunit, EIF1, eIF1A (EIF1AX), eIF3 complex, EIF5 and eIF2-GTP-initiator tRNA complex (eIF2 ternary complex). Interacts with EIF5; this interaction contributes to the maintenance of EIF1 within the open 43S PIC. Interacts through its C-terminal domain (CTD) with the CTD of EIF5B; from the location of the start codon by the 43S complex until the formation of the 80S complex. In terms of tissue distribution, ubiquitous.

The protein localises to the cytoplasm. In terms of biological role, component of the 43S pre-initiation complex (43S PIC), which binds to the mRNA cap-proximal region, scans mRNA 5'-untranslated region, and locates the initiation codon. This protein enhances formation of the cap-proximal complex. Together with EIF1, facilitates scanning, start codon recognition, promotion of the assembly of 48S complex at the initiation codon (43S PIC becomes 48S PIC after the start codon is reached), and dissociation of aberrant complexes. After start codon location, together with EIF5B orients the initiator methionine-tRNA in a conformation that allows 60S ribosomal subunit joining to form the 80S initiation complex. Is released after 80S initiation complex formation, just after GTP hydrolysis by EIF5B, and before release of EIF5B. Its globular part is located in the A site of the 40S ribosomal subunit. Its interaction with EIF5 during scanning contribute to the maintenance of EIF1 within the open 43S PIC. In contrast to yeast orthologs, does not bind EIF1. The chain is Eukaryotic translation initiation factor 1A, Y-chromosomal (EIF1AY) from Homo sapiens (Human).